Reading from the N-terminus, the 565-residue chain is MSEQKLALNEYLKTDSDYLRGTIKEGLDSAVTGSFSDGDQQLIKFHGFYQQDDRDLRNERKEQKLEPLYSFMLRARVPGGICSPQQWLGVDKIASTLTSSNSIRLTTRQTFQYHGIPKRNLKTIIQDLDREALDSIAACGDVNRNVMCNPNPVESKLHEQAYAVAKQLSDHLLPHTRAYAEIWLDEEKLLSTEDETVEPVYGKTYLPRKFKMAVAVPPDNDVDVYTNDLGFIAVAENGELVGFNLTAGGGMGSTHGEVETFPRLADDFGFIKTEDVMKFAEAVMTVQRDWGNRVNRKRSRLKYTIVDHGYEQFKAEVELRAGVKFEPKRDVVIGDRGDRYGWVEGVDGKWHLTLFIESGRIKDLPGQTLQTGLREIAKIHKGDFRMTSNQNMIIAGVAAEDKATIEGLARKHGLLGQVLTQTRGHSIACVALPTCPLAMAEAERYFPEFIDHIDALQAKHGISEQAIVVRMTGCPNGCARPFAAEIGLVGKAPGRYNLYLGASFEGTRLNKMHRENIQEAEILAELDTLFGRYAVERDAGETFGNFTVRVGVVKAVIDAAKDFHG.

[4Fe-4S] cluster contacts are provided by Cys-429, Cys-435, Cys-474, and Cys-478. Cys-478 lines the siroheme pocket.

The protein belongs to the nitrite and sulfite reductase 4Fe-4S domain family. Alpha(8)-beta(8). The alpha component is a flavoprotein, the beta component is a hemoprotein. Requires siroheme as cofactor. It depends on [4Fe-4S] cluster as a cofactor.

The enzyme catalyses hydrogen sulfide + 3 NADP(+) + 3 H2O = sulfite + 3 NADPH + 4 H(+). It functions in the pathway sulfur metabolism; hydrogen sulfide biosynthesis; hydrogen sulfide from sulfite (NADPH route): step 1/1. Its function is as follows. Component of the sulfite reductase complex that catalyzes the 6-electron reduction of sulfite to sulfide. This is one of several activities required for the biosynthesis of L-cysteine from sulfate. The protein is Sulfite reductase [NADPH] hemoprotein beta-component of Shewanella baltica (strain OS185).